Reading from the N-terminus, the 116-residue chain is Small ribosomal subunit protein bS18c (116 aa).

The span at 1-13 (MKPSFRNTSPSFR) shows a compositional bias: polar residues. A disordered region spans residues 1-51 (MKPSFRNTSPSFRNRSKPYFRNRSKPYFRNRSKPSFRNTSKRFSPNQQSFR). The span at 14–34 (NRSKPYFRNRSKPYFRNRSKP) shows a compositional bias: basic residues. The segment covering 35–49 (SFRNTSKRFSPNQQS) has biased composition (polar residues).

It belongs to the bacterial ribosomal protein bS18 family. In terms of assembly, part of the 30S ribosomal subunit.

It is found in the plastid. The protein resides in the chloroplast. This Cryptomeria japonica (Japanese cedar) protein is Small ribosomal subunit protein bS18c.